The chain runs to 197 residues: FMN-dependent NADH:quinone oxidoreductase (197 aa).

FMN is bound by residues Ser-10 and 16–18 (SIS).

The protein belongs to the azoreductase type 1 family. As to quaternary structure, homodimer. FMN serves as cofactor.

It carries out the reaction 2 a quinone + NADH + H(+) = 2 a 1,4-benzosemiquinone + NAD(+). It catalyses the reaction N,N-dimethyl-1,4-phenylenediamine + anthranilate + 2 NAD(+) = 2-(4-dimethylaminophenyl)diazenylbenzoate + 2 NADH + 2 H(+). In terms of biological role, quinone reductase that provides resistance to thiol-specific stress caused by electrophilic quinones. Functionally, also exhibits azoreductase activity. Catalyzes the reductive cleavage of the azo bond in aromatic azo compounds to the corresponding amines. The polypeptide is FMN-dependent NADH:quinone oxidoreductase (Erythrobacter litoralis (strain HTCC2594)).